Here is a 184-residue protein sequence, read N- to C-terminus: Photosystem I assembly protein Ycf4 (184 aa).

2 helical membrane-spanning segments follow: residues 19–39 and 64–84; these read ISNF…VLVG and LVMS…WCTI.

The protein belongs to the Ycf4 family.

It is found in the plastid. It localises to the chloroplast thylakoid membrane. Functionally, seems to be required for the assembly of the photosystem I complex. The sequence is that of Photosystem I assembly protein Ycf4 from Oenothera elata subsp. hookeri (Hooker's evening primrose).